The primary structure comprises 95 residues: Small ribosomal subunit protein bS18 (95 aa).

The protein belongs to the bacterial ribosomal protein bS18 family. In terms of assembly, part of the 30S ribosomal subunit. Forms a tight heterodimer with protein bS6.

Binds as a heterodimer with protein bS6 to the central domain of the 16S rRNA, where it helps stabilize the platform of the 30S subunit. In Rickettsia felis (strain ATCC VR-1525 / URRWXCal2) (Rickettsia azadi), this protein is Small ribosomal subunit protein bS18.